The primary structure comprises 311 residues: MSQQLPVRIATRKSPLALWQAHFVKDALQAAHPGLEVELVTMVTKGDIILDTPLAKIGGKGLFVKELEVAMLEGRADLAVHSMKDVPVEFPEGLGLVTICERGDPRDAFVSNTYNNIDELPQGATVGTCSLRRQCQLKEYRPDLIIKELRGNVGTRLQKLDDGNYDAIILACAGLIRLGLEDRIKSSIEPEQSLPAVGQGAVGIETRLNDDRIRALLAPLNHPETAHRVLCERAMNNRLEGGCQVPIGSYSLIDGDQIWLRALVGEPDGSIMVRGETTGPVSDAEELGTKLAEQLLNDGAKDILDRLYADA.

Residue Cys-243 is modified to S-(dipyrrolylmethanemethyl)cysteine.

This sequence belongs to the HMBS family. As to quaternary structure, monomer. Dipyrromethane is required as a cofactor.

The enzyme catalyses 4 porphobilinogen + H2O = hydroxymethylbilane + 4 NH4(+). Its pathway is porphyrin-containing compound metabolism; protoporphyrin-IX biosynthesis; coproporphyrinogen-III from 5-aminolevulinate: step 2/4. In terms of biological role, tetrapolymerization of the monopyrrole PBG into the hydroxymethylbilane pre-uroporphyrinogen in several discrete steps. The chain is Porphobilinogen deaminase from Aliivibrio salmonicida (strain LFI1238) (Vibrio salmonicida (strain LFI1238)).